Consider the following 294-residue polypeptide: MITRLFAQLVSLSIVTYWNDAIVATNFSWLFITFFVMTFTFRTFSRYFKKPIIWTLYFFLCLIAFLLLWAARIHINILFSFAFGDVYSFFMAGVFLFYGFGELLPIGSDSDVGEASWVVNPATGASGSGGNGWTESAANDPAREVSLAPFPPQLTHPVPFPAEPGSPDPVSPPPPIASFYSRIERAESLHAGNIELAEDLQRIQEMERNLENERSPYRGRELAARIDWEVRELEGKVARNRAWDMVRDAQLDIWRQGLDQELVRQQENESRLEERRFQSHSTNSLFEADSSRDN.

3 helical membrane passes run 21-41, 51-71, and 77-97; these read AIVA…TFTF, PIIW…LWAA, and ILFS…VFLF. Residues 156-176 form a disordered region; that stretch reads HPVPFPAEPGSPDPVSPPPPI. A coiled-coil region spans residues 184–215; the sequence is ERAESLHAGNIELAEDLQRIQEMERNLENERS. Over residues 265 to 277 the composition is skewed to basic and acidic residues; it reads QQENESRLEERRF. Residues 265 to 294 are disordered; that stretch reads QQENESRLEERRFQSHSTNSLFEADSSRDN.

Its subcellular location is the mitochondrion membrane. This is an uncharacterized protein from Arabidopsis thaliana (Mouse-ear cress).